A 201-amino-acid polypeptide reads, in one-letter code: MTDQNHDTQADDDANDAPATDFSNQFLIAMPQMVEGSLAGSVIYVCEHTTRGALGLVINRPTDLTLESLFERIDLTLEIRPVKDSPVFFGGPVQTDRGFVLHAPAGDYSSSIKLGDLALTTSRDVLQAVADGNGPARMLVTLGYAGWGAGQLESEMAQNAWLTVGADADIIFDVPPEDRYPAALKLLGIDPVMLSGGAGHA.

Belongs to the UPF0301 (AlgH) family.

The sequence is that of UPF0301 protein Bpet0561 from Bordetella petrii (strain ATCC BAA-461 / DSM 12804 / CCUG 43448).